Here is a 152-residue protein sequence, read N- to C-terminus: Large-conductance mechanosensitive channel (152 aa).

A run of 3 helical transmembrane segments spans residues 21–41 (IDLA…DSLV), 44–64 (VVMP…NKFL), and 92–112 (GNFI…FWMV).

The protein belongs to the MscL family. As to quaternary structure, homopentamer.

The protein resides in the cell inner membrane. In terms of biological role, channel that opens in response to stretch forces in the membrane lipid bilayer. May participate in the regulation of osmotic pressure changes within the cell. In Bordetella pertussis (strain Tohama I / ATCC BAA-589 / NCTC 13251), this protein is Large-conductance mechanosensitive channel.